Consider the following 123-residue polypeptide: WAP four-disulfide core domain protein 5 (123 aa).

An N-terminal signal peptide occupies residues 1 to 24; the sequence is MRIQSLLLLGALLAVGSQLPAVFG. WAP domains lie at 27-73 and 74-121; these read KGEK…CIPR and VSVK…RDPA. 8 disulfide bridges follow: Cys34–Cys62, Cys41–Cys66, Cys49–Cys61, Cys55–Cys70, Cys81–Cys109, Cys88–Cys113, Cys96–Cys108, and Cys102–Cys117.

The protein resides in the secreted. In terms of biological role, putative acid-stable proteinase inhibitor. This Macaca mulatta (Rhesus macaque) protein is WAP four-disulfide core domain protein 5 (WFDC5).